The following is a 67-amino-acid chain: Large ribosomal subunit protein bL35 (67 aa).

This sequence belongs to the bacterial ribosomal protein bL35 family.

This chain is Large ribosomal subunit protein bL35, found in Leptospira borgpetersenii serovar Hardjo-bovis (strain JB197).